We begin with the raw amino-acid sequence, 190 residues long: Protein A52 (190 aa).

The protein belongs to the orthopoxvirus A52R protein family. Interacts with host TRAF6 and IRAK2.

Its function is as follows. Bcl-2-like protein which targets host toll-like receptor signaling complexes to suppress innate immune response. Interacts with host TRAF6 to activate p38 and subsequently induce the expression of several cytokines such as IL-10. Also associates with host IRAK2 to inhibit NF-kappa-B signaling. This Vaccinia virus (strain Western Reserve) (VACV) protein is Protein A52.